The primary structure comprises 418 residues: Serine hydroxymethyltransferase (418 aa).

Residues Leu-120 and 124–126 contribute to the (6S)-5,6,7,8-tetrahydrofolate site; that span reads GHL. Residue Lys-229 is modified to N6-(pyridoxal phosphate)lysine. 353 to 355 is a (6S)-5,6,7,8-tetrahydrofolate binding site; the sequence is SPF.

The protein belongs to the SHMT family. Homodimer. Requires pyridoxal 5'-phosphate as cofactor.

The protein localises to the cytoplasm. It catalyses the reaction (6R)-5,10-methylene-5,6,7,8-tetrahydrofolate + glycine + H2O = (6S)-5,6,7,8-tetrahydrofolate + L-serine. It participates in one-carbon metabolism; tetrahydrofolate interconversion. Its pathway is amino-acid biosynthesis; glycine biosynthesis; glycine from L-serine: step 1/1. In terms of biological role, catalyzes the reversible interconversion of serine and glycine with tetrahydrofolate (THF) serving as the one-carbon carrier. This reaction serves as the major source of one-carbon groups required for the biosynthesis of purines, thymidylate, methionine, and other important biomolecules. Also exhibits THF-independent aldolase activity toward beta-hydroxyamino acids, producing glycine and aldehydes, via a retro-aldol mechanism. This chain is Serine hydroxymethyltransferase, found in Psychrobacter sp. (strain PRwf-1).